Reading from the N-terminus, the 259-residue chain is MSTPLDHSIRNPISSAEVPPELSENIILTSLDDIYNWARISSIYPLMYGTACCFIEFAAMIASRFDMERFGMFPRASPRQADLIILAGTLTMQMAVPTRRLYDQMPEPKYVIAMGACMITGGMFSADSPTALRGADKLLPIDVYIPGCPPRPEAILDAVTKLRKKIANESPQERQNLQQTHRFYSIAHQMRPAPPLHTGKYLLSETRQQPPQALAEVMGMNIPAFQSPEQQELLLQSGQQRELISREVDEAYKSSSKMY.

Positions 52, 53, 117, and 148 each coordinate [4Fe-4S] cluster.

It belongs to the complex I 20 kDa subunit family. NDH-1 can be composed of about 15 different subunits; different subcomplexes with different compositions have been identified which probably have different functions. [4Fe-4S] cluster serves as cofactor.

It is found in the cellular thylakoid membrane. The enzyme catalyses a plastoquinone + NADH + (n+1) H(+)(in) = a plastoquinol + NAD(+) + n H(+)(out). It carries out the reaction a plastoquinone + NADPH + (n+1) H(+)(in) = a plastoquinol + NADP(+) + n H(+)(out). Its function is as follows. NDH-1 shuttles electrons from an unknown electron donor, via FMN and iron-sulfur (Fe-S) centers, to quinones in the respiratory and/or the photosynthetic chain. The immediate electron acceptor for the enzyme in this species is believed to be plastoquinone. Couples the redox reaction to proton translocation, and thus conserves the redox energy in a proton gradient. Cyanobacterial NDH-1 also plays a role in inorganic carbon-concentration. The protein is NAD(P)H-quinone oxidoreductase subunit K 2 (ndhK2) of Cyanothece sp. (strain PCC 7425 / ATCC 29141).